A 446-amino-acid polypeptide reads, in one-letter code: Phosphoglucosamine mutase (446 aa).

The active-site Phosphoserine intermediate is the Ser-99. The Mg(2+) site is built by Ser-99, Asp-242, Asp-244, and Asp-246. Ser-99 is subject to Phosphoserine.

Belongs to the phosphohexose mutase family. Requires Mg(2+) as cofactor. Post-translationally, activated by phosphorylation.

The catalysed reaction is alpha-D-glucosamine 1-phosphate = D-glucosamine 6-phosphate. In terms of biological role, catalyzes the conversion of glucosamine-6-phosphate to glucosamine-1-phosphate. In Campylobacter hominis (strain ATCC BAA-381 / DSM 21671 / CCUG 45161 / LMG 19568 / NCTC 13146 / CH001A), this protein is Phosphoglucosamine mutase.